A 503-amino-acid polypeptide reads, in one-letter code: Betaine aldehyde dehydrogenase 2 (503 aa).

161-170 lines the betaine aldehyde pocket; it reads WNYPLLMATW. Residue 238 to 243 participates in NAD(+) binding; that stretch reads GSYETG. Residues Glu260, 292-295, and Cys453 contribute to the betaine aldehyde site; that span reads QICS. Active-site residues include Glu260 and Cys294. Residues 260–261 and Cys294 contribute to the 4-aminobutanal site; that span reads EL. 4-aminobutanal is bound at residue Trp459. The short motif at 501–503 is the Microbody targeting signal element; the sequence is SKL.

The protein belongs to the aldehyde dehydrogenase family. Homodimer.

Its subcellular location is the peroxisome. The protein localises to the cytoplasm. It catalyses the reaction betaine aldehyde + NAD(+) + H2O = glycine betaine + NADH + 2 H(+). The protein operates within amine and polyamine biosynthesis; betaine biosynthesis via choline pathway; betaine from betaine aldehyde: step 1/1. Its function is as follows. Dehydrogenase that can use N-acetyl-c-aminobutyraldehyde (NAGABald), gamma-guanidinobutyraldehyde (GGBald), betaine aldehyde (Bet-ald), gamma-aminobutyraldehyde (GAB-ald), acetaldehyde, 4-aminobutylaldehyde (AB-ald), 3-aminopropionaldehyde (AP-ald), 4-N-trimethylaminobutyraldehyde (TMAB-ald) and 3-N-trimethylaminopropionaldehyde (TMAP-ald) as substrates. Catalyzes the oxidation of GAB-ald more efficiently than Bet-ald. Mediates the conversion of GAB-ald into gamma-aminobutyric acid (GABA), and prevents the formation of 2-acetyl-1-pyrroline (2AP) which gives fragrant rice its aromatic properties. The protein is Betaine aldehyde dehydrogenase 2 (BADH2) of Oryza sativa subsp. indica (Rice).